Reading from the N-terminus, the 105-residue chain is Thioredoxin (105 aa).

Residues 2-105 (VKSVGNLADF…KLEETIKSLV (104 aa)) form the Thioredoxin domain. Active-site nucleophile residues include Cys-32 and Cys-35. A disulfide bridge connects residues Cys-32 and Cys-35. S-nitrosocysteine is present on residues Cys-69 and Cys-73.

It belongs to the thioredoxin family. In terms of processing, may be nitrosylated on several cysteine residues, depending on the oxidation state. Nitrosylated Cys-73 may serve as donor for nitrosylation of target proteins.

The protein resides in the nucleus. It is found in the cytoplasm. It localises to the secreted. Its function is as follows. Participates in various redox reactions through the reversible oxidation of its active center dithiol to a disulfide and catalyzes dithiol-disulfide exchange reactions. Plays a role in the reversible S-nitrosylation of cysteine residues in target proteins, and thereby contributes to the response to intracellular nitric oxide. Nitrosylates the active site Cys of CASP3 in response to nitric oxide (NO), and thereby inhibits caspase-3 activity. Induces the FOS/JUN AP-1 DNA binding activity in ionizing radiation (IR) cells through its oxidation/reduction status and stimulates AP-1 transcriptional activity. The polypeptide is Thioredoxin (TXN) (Gallus gallus (Chicken)).